The following is a 112-amino-acid chain: uncharacterized protein (112 aa).

This is an uncharacterized protein from Bacillus subtilis (strain 168).